The sequence spans 799 residues: LPS-assembly protein LptD (799 aa).

Residues 1 to 34 (MMHELDLRPHLARFAQRPLALLAWALLQGTSVNA) form the signal peptide.

The protein belongs to the LptD family. As to quaternary structure, component of the lipopolysaccharide transport and assembly complex. Interacts with LptE and LptA.

It localises to the cell outer membrane. Functionally, together with LptE, is involved in the assembly of lipopolysaccharide (LPS) at the surface of the outer membrane. The protein is LPS-assembly protein LptD of Albidiferax ferrireducens (strain ATCC BAA-621 / DSM 15236 / T118) (Rhodoferax ferrireducens).